The sequence spans 603 residues: Translation initiation factor IF-2 (603 aa).

Positions 112–279 constitute a tr-type G domain; it reads TRPPIITIMG…NINLQAEILD (168 aa). The G1 stretch occupies residues 121 to 128; sequence GHVDHGKT. Residue 121-128 participates in GTP binding; that stretch reads GHVDHGKT. Residues 146-150 are G2; it reads GITQH. Residues 167–170 form a G3 region; sequence DTPG. GTP is bound by residues 167–171 and 221–224; these read DTPGH and NKMD. Residues 221 to 224 are G4; that stretch reads NKMD. Residues 257–259 form a G5 region; the sequence is SAL.

The protein belongs to the TRAFAC class translation factor GTPase superfamily. Classic translation factor GTPase family. IF-2 subfamily.

The protein localises to the cytoplasm. In terms of biological role, one of the essential components for the initiation of protein synthesis. Protects formylmethionyl-tRNA from spontaneous hydrolysis and promotes its binding to the 30S ribosomal subunits. Also involved in the hydrolysis of GTP during the formation of the 70S ribosomal complex. The sequence is that of Translation initiation factor IF-2 from Mycoplasmopsis pulmonis (strain UAB CTIP) (Mycoplasma pulmonis).